Reading from the N-terminus, the 92-residue chain is Co-chaperonin GroES (92 aa).

It belongs to the GroES chaperonin family. As to quaternary structure, heptamer of 7 subunits arranged in a ring. Interacts with the chaperonin GroEL.

It is found in the cytoplasm. Functionally, together with the chaperonin GroEL, plays an essential role in assisting protein folding. The GroEL-GroES system forms a nano-cage that allows encapsulation of the non-native substrate proteins and provides a physical environment optimized to promote and accelerate protein folding. GroES binds to the apical surface of the GroEL ring, thereby capping the opening of the GroEL channel. In Methanosarcina barkeri (strain Fusaro / DSM 804), this protein is Co-chaperonin GroES.